The primary structure comprises 233 residues: Glutathione S-transferase U15 (233 aa).

One can recognise a GST N-terminal domain in the interval 5-85 (EEVKLLGTWY…YIDETWNSSG (81 aa)). Glutathione-binding positions include 15-16 (SP), 42-43 (SK), 56-57 (KV), and 69-70 (VS). Residues 92-219 (HPYDRALARF…VPDIDKVAKF (128 aa)) form the GST C-terminal domain. Phosphothreonine is present on Thr-158.

It belongs to the GST superfamily. Tau family.

The protein resides in the cytoplasm. Its subcellular location is the cytosol. The enzyme catalyses RX + glutathione = an S-substituted glutathione + a halide anion + H(+). Its function is as follows. May be involved in the conjugation of reduced glutathione to a wide number of exogenous and endogenous hydrophobic electrophiles and have a detoxification role against certain herbicides. The chain is Glutathione S-transferase U15 (GSTU15) from Arabidopsis thaliana (Mouse-ear cress).